The primary structure comprises 334 residues: Protein CUP-SHAPED COTYLEDON 3 (334 aa).

In terms of domain architecture, NAC spans 22 to 171 (LPPGFRFHPT…EWVICRVFNK (150 aa)). The DNA-binding element occupies 121–177 (VGMKKTLVFYKGRAPRGLKTKWVMHEYRLENDHSHRHTCKEEWVICRVFNKTGDRKN).

In a general manner, present at the boundaries between mersitems and araising primordia.

It localises to the nucleus. Its function is as follows. Transcription activator. Involved in molecular mechanisms regulating shoot apical meristem (SAM) formation during embryogenesis and organ separation. Required for axillary meristem initiation and separation of the meristem from the main stem. May act as an inhibitor of cell division. In Arabidopsis thaliana (Mouse-ear cress), this protein is Protein CUP-SHAPED COTYLEDON 3 (NAC031).